A 168-amino-acid chain; its full sequence is Transcription antitermination protein NusB (168 aa).

This sequence belongs to the NusB family.

In terms of biological role, involved in transcription antitermination. Required for transcription of ribosomal RNA (rRNA) genes. Binds specifically to the boxA antiterminator sequence of the ribosomal RNA (rrn) operons. The polypeptide is Transcription antitermination protein NusB (Brucella anthropi (strain ATCC 49188 / DSM 6882 / CCUG 24695 / JCM 21032 / LMG 3331 / NBRC 15819 / NCTC 12168 / Alc 37) (Ochrobactrum anthropi)).